Here is a 75-residue protein sequence, read N- to C-terminus: Putative membrane protein insertion efficiency factor (75 aa).

This sequence belongs to the UPF0161 family.

The protein resides in the cell membrane. In terms of biological role, could be involved in insertion of integral membrane proteins into the membrane. This chain is Putative membrane protein insertion efficiency factor, found in Bacillus velezensis (strain DSM 23117 / BGSC 10A6 / LMG 26770 / FZB42) (Bacillus amyloliquefaciens subsp. plantarum).